An 875-amino-acid polypeptide reads, in one-letter code: MSDIDQRLREDVHLLGELLGETIRQQHGEAFLQKIEDIRHSAKADRRGEGEQLSSTLGDLAEEDLLPVARAFNQFLNLANIAEQYQLIHRRDTDQPEPFEARVLPELLARLKAAGHGNDALARQLARLDIQLVLTAHPTEVARRTLIQKYDAIAAQLAAQDHRDLIPAERQQVRERLRRLIAEAWHTEEIRRTRPTPVDEAKWGFAVIEHSLWQAVPNHLRKVDKALFEATGLRLPLESAPVRFASWMGGDRDGNPNVTAAVTREVLLLARWMAADLFLRDIDYLAAELSMQQASGALREQVGDSAEPYRALLKQLRDRLRATRAWAHASLAGPQPASAAVLVDNRDLIAPLELCYQSLHACGMGVIADGPLLDSLRRAVTFGLFLVRLDVRQDAARHRDALSEITDYLGLGRYADWDEERRIEFLQHELKNRRPLLPAHFKPAAETAEVLATCREIAAAPAASLGSYVISMAGAASDVLAVQLLLKEAGLTRPMRVVPLFETLADLDNAGPVMERLLGLPGYRAGLHGPQEVMIGYSDSAKDAGTTAAAWAQYRAQENLVRICREHQVELLLFHGRGGTVGRGGGPAHAAILSQPPGSVGGRFRTTEQGEMIRFKFGLPGIAEQNLNLYLAAVLEATLLPPPPPEPAWRALMDQLAADGVKAYRGVVRDNPEFVEYFRQSTPEQELGRLPLGSRPAKRRAGGIESLRAIPWIFGWTQTRLMLPAWLGWETALSNALARGQADLLAQMREQWPFFRTRIDMLEMVLAKADAQIAEAYDQRLVQPRLLPLGAHLRDLLSQSCQVVLGLTGQQVLLAHSPETLEFIRLRNTYLDPLHRLQAELLARSRSREAALDSPLEQALLVTVAGIAAGLRNTG.

Residues H137 and K542 contribute to the active site.

It belongs to the PEPCase type 1 family. Mg(2+) is required as a cofactor.

The catalysed reaction is oxaloacetate + phosphate = phosphoenolpyruvate + hydrogencarbonate. Functionally, forms oxaloacetate, a four-carbon dicarboxylic acid source for the tricarboxylic acid cycle. In Pseudomonas entomophila (strain L48), this protein is Phosphoenolpyruvate carboxylase.